A 220-amino-acid chain; its full sequence is Small ribosomal subunit protein mS23 (220 aa).

This sequence belongs to the mitochondrion-specific ribosomal protein mS23 family. As to quaternary structure, component of the mitochondrial small ribosomal subunit (mt-SSU). Mature yeast 74S mitochondrial ribosomes consist of a small (37S) and a large (54S) subunit. The 37S small subunit contains a 15S ribosomal RNA (15S mt-rRNA) and at least 32 different proteins. The 54S large subunit contains a 21S rRNA (21S mt-rRNA) and at least 45 different proteins.

It localises to the mitochondrion. Component of the mitochondrial ribosome (mitoribosome), a dedicated translation machinery responsible for the synthesis of mitochondrial genome-encoded proteins, including at least some of the essential transmembrane subunits of the mitochondrial respiratory chain. The mitoribosomes are attached to the mitochondrial inner membrane and translation products are cotranslationally integrated into the membrane. This is Small ribosomal subunit protein mS23 (rsm25) from Schizosaccharomyces pombe (strain 972 / ATCC 24843) (Fission yeast).